The following is a 344-amino-acid chain: uncharacterized protein (344 aa).

At 1-98 (MIDFVKSRDT…NNDEIGIWNY (98 aa)) the chain is on the cytoplasmic side. A helical membrane pass occupies residues 99 to 119 (ISVAEMGGVLLFLSYWIWTCL). A topological domain (lumenal) is located at residue His-120. The chain crosses the membrane as a helical span at residues 121–141 (FSKIIFPAQKVICLYIFLFAL). At 142–169 (NQTLQECIEEYVFSSECIKYRQFYSVYE) the chain is on the cytoplasmic side. The helical transmembrane segment at 170-192 (IIDFLRTNFYRLFVIYCALGFGI) threads the bilayer. At 193–198 (TRTVPK) the chain is on the lumenal side. Residues 199–219 (YLMIKGISIVIALCSVYWISL) form a helical membrane-spanning segment. At 220–222 (YKD) the chain is on the cytoplasmic side. A helical membrane pass occupies residues 223–243 (VYVVSEIFDMIQYEVFPAIWV). Residues 244–273 (YSICHLLKQCTSVTTYENASKARFFRRMLN) are Lumenal-facing. The chain crosses the membrane as a helical span at residues 274–294 (AFIFIFCASPMLHYLSNIIFG). The Cytoplasmic portion of the chain corresponds to 295-344 (NFDYRLSVIIGDLFTFMEKIAFPCYIMFPTHNEALAYNRNVAEEAQEKMI).

It localises to the endoplasmic reticulum membrane. This is an uncharacterized protein from Schizosaccharomyces pombe (strain 972 / ATCC 24843) (Fission yeast).